Here is a 264-residue protein sequence, read N- to C-terminus: H-2 class II histocompatibility antigen, I-A beta chain (264 aa).

The signal sequence occupies residues methionine 1–arginine 31. The beta-1 stretch occupies residues proline 32–arginine 121. Over proline 32–lysine 225 the chain is Extracellular. Intrachain disulfides connect cysteine 42–cysteine 106 and cysteine 144–cysteine 200. Residue asparagine 46 is glycosylated (N-linked (GlcNAc...) asparagine). Residues valine 122 to tryptophan 215 form a beta-2 region. The Ig-like C1-type domain occupies proline 124–glutamate 214. The segment at lysine 216–lysine 225 is connecting peptide. The helical transmembrane segment at methionine 226 to phenylalanine 248 threads the bilayer. At arginine 249–serine 264 the chain is on the cytoplasmic side.

Belongs to the MHC class II family. Ubiquitinated in immature dendritic cells leading to down-regulation of MHC class II.

Its subcellular location is the membrane. The protein is H-2 class II histocompatibility antigen, I-A beta chain (H2-Eb1) of Mus musculus (Mouse).